Here is a 548-residue protein sequence, read N- to C-terminus: Chaperonin GroEL (548 aa).

Residues 30–33, lysine 51, 87–91, glycine 415, 479–481, and aspartate 495 each bind ATP; these read TLGP, DGTTT, and NAA.

This sequence belongs to the chaperonin (HSP60) family. In terms of assembly, forms a cylinder of 14 subunits composed of two heptameric rings stacked back-to-back. Interacts with the co-chaperonin GroES.

The protein resides in the cytoplasm. It carries out the reaction ATP + H2O + a folded polypeptide = ADP + phosphate + an unfolded polypeptide.. In terms of biological role, together with its co-chaperonin GroES, plays an essential role in assisting protein folding. The GroEL-GroES system forms a nano-cage that allows encapsulation of the non-native substrate proteins and provides a physical environment optimized to promote and accelerate protein folding. The polypeptide is Chaperonin GroEL (Klebsiella pneumoniae (strain 342)).